The sequence spans 241 residues: Terpene cyclase olcD (241 aa).

The next 7 membrane-spanning stretches (helical) occupy residues 19–39, 49–71, 76–95, 108–128, 137–157, 166–186, and 202–222; these read LSDILLVTLASGWLVCYFATI, WMPLLPLSCNVAWELVFITLYPP, ILGFWLLVNLGVIYSALRFA, YLPVLFVLAVGFWAWGHLALI, FYYGGMACQLMTSAAALSGLV, SYTIWLSRVIGTSSALAGLFF, and LMRWLAAAFGILDGVYGVQFW.

Belongs to the paxB family.

Its subcellular location is the membrane. Its pathway is secondary metabolite biosynthesis; terpenoid biosynthesis. Its function is as follows. Terpene cyclase; part of the gene cluster that mediates the biosynthesis of 15-deoxyoxalicine B. The first step of the pathway is the synthesis of nicotinyl-CoA from nicotinic acid by the nicotinic acid-CoA ligase olcI. Nicotinyl-CoA is then a substrate of polyketide synthase olcA to produce 4-hydroxy-6-(3-pyridinyl)-2H-pyran-2-one (HPPO) which is further prenylated by the polyprenyl transferase olcH to yield geranylgeranyl-HPPO. Geranylgeranyl pyrophosphate is provided by the cluster-specific geranylgeranyl pyrophosphate synthase olcC. The FAD-dependent monooxygenase olcE catalyzes the epoxidation of geranylgeranyl-HPPO and the terpene cyclase olcD catalyzes the cyclization of the terpenoid component, resulting in the formation of the tricyclic terpene moiety seen in predecaturin E. The cytochrome P450 monooxygenase then catalyzes the allylic oxidation of predecaturin E, which is followed by spirocylization with concomitant loss of one molecule of water to form decaturin E. Decaturin E is the substrate of the cytochrome P450 monooxygenase olcJ which hydroxylates it at the C-29 position to form decaturin F. The short-chain dehydrogenase/reductase olcF may catalyze the oxidation of decaturin F to generate the 29-hydroxyl-27-one intermediate, and subsequent hemiacetal formation probably leads to the formation of decaturin C. The dioxygenase olcK may be a peroxisomal enzyme that catalyzes the hydroxylation of decaturin C into decaturin A once decaturin C is shuttled into the peroxisome by the MFS transporter olcL. Finally the cytochrome P450 monooxygenase olcB catalyzes the oxidative rearrangement to yield 15-deoxyoxalicine B. In the absence of olcJ, decaturin E may be shunted to a pathway in which it is oxidized to a ketone, possibly by olcF, to form decaturin D, which undergoes further allylic oxidation to yield decaturin G. Moreover, in the absence of oclK or oclL, oclB can convert decaturin C into 15-deoxyoxalicine A. The polypeptide is Terpene cyclase olcD (Penicillium canescens).